An 81-amino-acid polypeptide reads, in one-letter code: CLAVATA3/ESR (CLE)-related protein 25 (81 aa).

The N-terminal stretch at 1 to 30 (MGGNGIRALVGVIASLGLIVFLLVGILANS) is a signal peptide. The interval 57–81 (KRKVPNGPDPIHNRKAETSRRPPRV) is disordered. A hydroxyproline mark is found at Pro61 and Pro64. Pro64 is a glycosylation site (O-linked (Ara...) hydroxyproline). Positions 67–81 (IHNRKAETSRRPPRV) are enriched in basic and acidic residues.

It belongs to the CLV3/ESR signal peptide family. Post-translationally, the O-glycosylation (arabinosylation) of the hydroxyproline Pro-64 enhances binding affinity of the CLE25p peptide for its receptor. Mostly expressed in flowers and siliques, and, to a lower extent, in roots, stems, apex, seedlings, leaves and pollen.

The protein localises to the secreted. It is found in the extracellular space. Extracellular signal peptide that regulates cell fate. Represses root apical meristem maintenance. Regulates the transition of protophloem cells from proliferation to differentiation, thus impinging on postembryonic growth capacity of the root meristem; this signaling pathway requires CRN and CLV2. This Arabidopsis thaliana (Mouse-ear cress) protein is CLAVATA3/ESR (CLE)-related protein 25.